Here is a 483-residue protein sequence, read N- to C-terminus: Aspartyl/glutamyl-tRNA(Asn/Gln) amidotransferase subunit B (483 aa).

It belongs to the GatB/GatE family. GatB subfamily. In terms of assembly, heterotrimer of A, B and C subunits.

It carries out the reaction L-glutamyl-tRNA(Gln) + L-glutamine + ATP + H2O = L-glutaminyl-tRNA(Gln) + L-glutamate + ADP + phosphate + H(+). It catalyses the reaction L-aspartyl-tRNA(Asn) + L-glutamine + ATP + H2O = L-asparaginyl-tRNA(Asn) + L-glutamate + ADP + phosphate + 2 H(+). Functionally, allows the formation of correctly charged Asn-tRNA(Asn) or Gln-tRNA(Gln) through the transamidation of misacylated Asp-tRNA(Asn) or Glu-tRNA(Gln) in organisms which lack either or both of asparaginyl-tRNA or glutaminyl-tRNA synthetases. The reaction takes place in the presence of glutamine and ATP through an activated phospho-Asp-tRNA(Asn) or phospho-Glu-tRNA(Gln). The protein is Aspartyl/glutamyl-tRNA(Asn/Gln) amidotransferase subunit B of Thermomicrobium roseum (strain ATCC 27502 / DSM 5159 / P-2).